The following is a 162-amino-acid chain: Urease subunit beta (162 aa).

Residues 116–162 (WRRSSAAGDAPQELPQVEAAERGRKLDDATDVDTNVGTEEGFEEGRN) are disordered. Residues 134–143 (AAERGRKLDD) show a composition bias toward basic and acidic residues.

The protein belongs to the urease beta subunit family. In terms of assembly, heterotrimer of UreA (gamma), UreB (beta) and UreC (alpha) subunits. Three heterotrimers associate to form the active enzyme.

The protein resides in the cytoplasm. It catalyses the reaction urea + 2 H2O + H(+) = hydrogencarbonate + 2 NH4(+). It participates in nitrogen metabolism; urea degradation; CO(2) and NH(3) from urea (urease route): step 1/1. This Corynebacterium glutamicum (strain ATCC 13032 / DSM 20300 / JCM 1318 / BCRC 11384 / CCUG 27702 / LMG 3730 / NBRC 12168 / NCIMB 10025 / NRRL B-2784 / 534) protein is Urease subunit beta.